The primary structure comprises 423 residues: Probable multifunctional protein ADE2 (423 aa).

The interval 1 to 263 is SAICAR synthetase; the sequence is MSSLAEIASR…KVMDITATFS (263 aa). An AIR carboxylase region spans residues 264-423; the sequence is KHQQKCHVLV…NIYNANRKLE (160 aa).

This sequence in the N-terminal section; belongs to the SAICAR synthetase family. The protein in the C-terminal section; belongs to the AIR carboxylase family. Class II subfamily.

The enzyme catalyses 5-amino-1-(5-phospho-D-ribosyl)imidazole-4-carboxylate + L-aspartate + ATP = (2S)-2-[5-amino-1-(5-phospho-beta-D-ribosyl)imidazole-4-carboxamido]succinate + ADP + phosphate + 2 H(+). It catalyses the reaction 5-amino-1-(5-phospho-D-ribosyl)imidazole-4-carboxylate + H(+) = 5-amino-1-(5-phospho-beta-D-ribosyl)imidazole + CO2. The protein operates within purine metabolism; IMP biosynthesis via de novo pathway; 5-amino-1-(5-phospho-D-ribosyl)imidazole-4-carboxamide from 5-amino-1-(5-phospho-D-ribosyl)imidazole-4-carboxylate: step 1/2. Its pathway is purine metabolism; IMP biosynthesis via de novo pathway; 5-amino-1-(5-phospho-D-ribosyl)imidazole-4-carboxylate from 5-amino-1-(5-phospho-D-ribosyl)imidazole (carboxylase route): step 1/1. This Caenorhabditis elegans protein is Probable multifunctional protein ADE2.